We begin with the raw amino-acid sequence, 325 residues long: Glycerol-3-phosphate dehydrogenase [NAD(P)+] (325 aa).

NADPH-binding residues include Ser14, Phe15, Arg35, and Lys109. Residues Lys109 and Gly137 each contribute to the sn-glycerol 3-phosphate site. Ala141 is a binding site for NADPH. Sn-glycerol 3-phosphate is bound by residues Lys192, Asp247, Ser257, Arg258, and Asn259. The Proton acceptor role is filled by Lys192. Arg258 is an NADPH binding site. 2 residues coordinate NADPH: Leu282 and Glu284.

This sequence belongs to the NAD-dependent glycerol-3-phosphate dehydrogenase family.

It is found in the cytoplasm. It carries out the reaction sn-glycerol 3-phosphate + NAD(+) = dihydroxyacetone phosphate + NADH + H(+). The catalysed reaction is sn-glycerol 3-phosphate + NADP(+) = dihydroxyacetone phosphate + NADPH + H(+). The protein operates within membrane lipid metabolism; glycerophospholipid metabolism. In terms of biological role, catalyzes the reduction of the glycolytic intermediate dihydroxyacetone phosphate (DHAP) to sn-glycerol 3-phosphate (G3P), the key precursor for phospholipid synthesis. This is Glycerol-3-phosphate dehydrogenase [NAD(P)+] from Rickettsia conorii (strain ATCC VR-613 / Malish 7).